A 167-amino-acid polypeptide reads, in one-letter code: Thiol peroxidase (167 aa).

The Thioredoxin domain maps to 18 to 167 (VKVGDQAPDF…PIEAAKALVK (150 aa)). Cys60 functions as the Cysteine sulfenic acid (-SOH) intermediate in the catalytic mechanism. Cys60 and Cys94 are joined by a disulfide.

The protein belongs to the peroxiredoxin family. Tpx subfamily. In terms of assembly, homodimer.

The enzyme catalyses a hydroperoxide + [thioredoxin]-dithiol = an alcohol + [thioredoxin]-disulfide + H2O. Thiol-specific peroxidase that catalyzes the reduction of hydrogen peroxide and organic hydroperoxides to water and alcohols, respectively. Plays a role in cell protection against oxidative stress by detoxifying peroxides. The sequence is that of Thiol peroxidase from Bacillus subtilis (strain 168).